Here is a 174-residue protein sequence, read N- to C-terminus: B3 domain-containing protein At2g31862 (174 aa).

A DNA-binding region (TF-B3) is located at residues 1–71 (MWVNLSCMCH…KLYIALVPLD (71 aa)).

It is found in the nucleus. The protein is B3 domain-containing protein At2g31862 of Arabidopsis thaliana (Mouse-ear cress).